The chain runs to 94 residues: Co-chaperonin GroES (94 aa).

Belongs to the GroES chaperonin family. As to quaternary structure, heptamer of 7 subunits arranged in a ring. Interacts with the chaperonin GroEL.

The protein localises to the cytoplasm. In terms of biological role, together with the chaperonin GroEL, plays an essential role in assisting protein folding. The GroEL-GroES system forms a nano-cage that allows encapsulation of the non-native substrate proteins and provides a physical environment optimized to promote and accelerate protein folding. GroES binds to the apical surface of the GroEL ring, thereby capping the opening of the GroEL channel. The protein is Co-chaperonin GroES of Streptococcus oralis.